The primary structure comprises 113 residues: Large ribosomal subunit protein bL19 (113 aa).

It belongs to the bacterial ribosomal protein bL19 family.

In terms of biological role, this protein is located at the 30S-50S ribosomal subunit interface and may play a role in the structure and function of the aminoacyl-tRNA binding site. The polypeptide is Large ribosomal subunit protein bL19 (Corynebacterium diphtheriae (strain ATCC 700971 / NCTC 13129 / Biotype gravis)).